We begin with the raw amino-acid sequence, 1557 residues long: DVA-1 polyprotein (1557 aa).

The signal sequence occupies residues M1–S21. Residues S22–R60 constitute a propeptide that is removed on maturation. Residue N997 is glycosylated (N-linked (GlcNAc...) asparagine).

Belongs to the NPA family. Post-translationally, nematode polyprotein allergens (NPAs) are synthesized as large polypeptides that are subsequently proteolytically cleaved to active polypeptide units.

Its function is as follows. Has high binding affinity for fatty acids and retinoids. This is DVA-1 polyprotein (DVA-1) from Dictyocaulus viviparus (Bovine lungworm).